The primary structure comprises 386 residues: Ribosomal RNA small subunit methyltransferase H (386 aa).

S-adenosyl-L-methionine-binding positions include 97-99 (GGH), D116, Y143, D167, and Q174.

It belongs to the methyltransferase superfamily. RsmH family.

It is found in the cytoplasm. It catalyses the reaction cytidine(1402) in 16S rRNA + S-adenosyl-L-methionine = N(4)-methylcytidine(1402) in 16S rRNA + S-adenosyl-L-homocysteine + H(+). In terms of biological role, specifically methylates the N4 position of cytidine in position 1402 (C1402) of 16S rRNA. The chain is Ribosomal RNA small subunit methyltransferase H from Mycolicibacterium paratuberculosis (strain ATCC BAA-968 / K-10) (Mycobacterium paratuberculosis).